Consider the following 349-residue polypeptide: Protein RecA (349 aa).

Position 65–72 (65–72 (GPESSGKT)) interacts with ATP.

This sequence belongs to the RecA family.

Its subcellular location is the cytoplasm. Its function is as follows. Can catalyze the hydrolysis of ATP in the presence of single-stranded DNA, the ATP-dependent uptake of single-stranded DNA by duplex DNA, and the ATP-dependent hybridization of homologous single-stranded DNAs. It interacts with LexA causing its activation and leading to its autocatalytic cleavage. The polypeptide is Protein RecA (Azotobacter vinelandii (strain DJ / ATCC BAA-1303)).